The following is a 72-amino-acid chain: Translation initiation factor IF-1 (72 aa).

Positions 1-72 (MSKQDVIELE…SRGRITWRKK (72 aa)) constitute an S1-like domain.

Belongs to the IF-1 family. As to quaternary structure, component of the 30S ribosomal translation pre-initiation complex which assembles on the 30S ribosome in the order IF-2 and IF-3, IF-1 and N-formylmethionyl-tRNA(fMet); mRNA recruitment can occur at any time during PIC assembly.

It is found in the cytoplasm. In terms of biological role, one of the essential components for the initiation of protein synthesis. Stabilizes the binding of IF-2 and IF-3 on the 30S subunit to which N-formylmethionyl-tRNA(fMet) subsequently binds. Helps modulate mRNA selection, yielding the 30S pre-initiation complex (PIC). Upon addition of the 50S ribosomal subunit IF-1, IF-2 and IF-3 are released leaving the mature 70S translation initiation complex. The polypeptide is Translation initiation factor IF-1 (Alkaliphilus oremlandii (strain OhILAs) (Clostridium oremlandii (strain OhILAs))).